The primary structure comprises 234 residues: ATP synthase subunit a 2 (234 aa).

A run of 5 helical transmembrane segments spans residues Ala-20–Thr-40, Tyr-78–Ile-98, Ser-107–Val-127, Val-169–Val-189, and Leu-194–Ile-214.

It belongs to the ATPase A chain family. In terms of assembly, F-type ATPases have 2 components, CF(1) - the catalytic core - and CF(0) - the membrane proton channel. CF(1) has five subunits: alpha(3), beta(3), gamma(1), delta(1), epsilon(1). CF(0) has four main subunits: a, b, b' and c.

Its subcellular location is the cellular thylakoid membrane. Its function is as follows. Key component of the proton channel; it plays a direct role in the translocation of protons across the membrane. The sequence is that of ATP synthase subunit a 2 from Acaryochloris marina (strain MBIC 11017).